We begin with the raw amino-acid sequence, 150 residues long: Large ribosomal subunit protein bL9 (150 aa).

Belongs to the bacterial ribosomal protein bL9 family.

Its function is as follows. Binds to the 23S rRNA. The chain is Large ribosomal subunit protein bL9 from Lactiplantibacillus plantarum (strain ATCC BAA-793 / NCIMB 8826 / WCFS1) (Lactobacillus plantarum).